The sequence spans 280 residues: Probable N-acetyltransferase 14 (280 aa).

The next 2 helical transmembrane spans lie at Leu-37 to Ile-57 and Cys-60 to Leu-80. The segment at Pro-111–Glu-152 is disordered. An N-acetyltransferase domain is found at Pro-116 to Thr-273.

This sequence belongs to the camello family.

It localises to the membrane. Functionally, probable acetyltransferase. This is Probable N-acetyltransferase 14 (nat14) from Danio rerio (Zebrafish).